We begin with the raw amino-acid sequence, 233 residues long: Rano class II histocompatibility antigen, A beta chain (233 aa).

The beta-1 stretch occupies residues 1 to 80; it reads DFVYQFKGLC…DTVCRYNYEE (80 aa). The Extracellular portion of the chain corresponds to 1–194; the sequence is DFVYQFKGLC…RAQSESAQSK (194 aa). N14 carries N-linked (GlcNAc...) asparagine glycosylation. The tract at residues 81 to 184 is beta-2; that stretch reads TEVPTSLRRL…SLESPVTVEW (104 aa). The Ig-like C1-type domain maps to 93–181; that stretch reads PNVAISLSRT…DHASLESPVT (89 aa). Residues 185–194 form a connecting peptide region; it reads RAQSESAQSK. Residues 195 to 215 traverse the membrane as a helical segment; that stretch reads MLSGIGGLVLGVIFLGLGLFI. Over 216–233 the chain is Cytoplasmic; that stretch reads RHKRQKGPQGPPPAGLLQ.

It belongs to the MHC class II family.

It localises to the membrane. Functionally, involved in the presentation of foreign antigens to the immune system. The polypeptide is Rano class II histocompatibility antigen, A beta chain (RT1-B) (Rattus norvegicus (Rat)).